Consider the following 428-residue polypeptide: Adenylosuccinate synthetase (428 aa).

GTP contacts are provided by residues 12-18 (GDEGKGK) and 40-42 (GHT). The active-site Proton acceptor is the D13. Mg(2+) is bound by residues D13 and G40. IMP-binding positions include 13 to 16 (DEGK), 38 to 41 (NAGH), T128, R142, Q223, T238, and R302. H41 (proton donor) is an active-site residue. 298-304 (TTTGRPR) lines the substrate pocket. Residues R304, 330 to 332 (KLD), and 412 to 414 (SVG) contribute to the GTP site.

This sequence belongs to the adenylosuccinate synthetase family. In terms of assembly, homodimer. It depends on Mg(2+) as a cofactor.

The protein resides in the cytoplasm. The enzyme catalyses IMP + L-aspartate + GTP = N(6)-(1,2-dicarboxyethyl)-AMP + GDP + phosphate + 2 H(+). It functions in the pathway purine metabolism; AMP biosynthesis via de novo pathway; AMP from IMP: step 1/2. Its function is as follows. Plays an important role in the de novo pathway of purine nucleotide biosynthesis. Catalyzes the first committed step in the biosynthesis of AMP from IMP. This chain is Adenylosuccinate synthetase, found in Desulforamulus reducens (strain ATCC BAA-1160 / DSM 100696 / MI-1) (Desulfotomaculum reducens).